Consider the following 151-residue polypeptide: D-aminoacyl-tRNA deacylase (151 aa).

Positions 137–138 (GP) match the Gly-cisPro motif, important for rejection of L-amino acids motif.

Belongs to the DTD family. Homodimer.

The protein resides in the cytoplasm. It catalyses the reaction glycyl-tRNA(Ala) + H2O = tRNA(Ala) + glycine + H(+). The enzyme catalyses a D-aminoacyl-tRNA + H2O = a tRNA + a D-alpha-amino acid + H(+). An aminoacyl-tRNA editing enzyme that deacylates mischarged D-aminoacyl-tRNAs. Also deacylates mischarged glycyl-tRNA(Ala), protecting cells against glycine mischarging by AlaRS. Acts via tRNA-based rather than protein-based catalysis; rejects L-amino acids rather than detecting D-amino acids in the active site. By recycling D-aminoacyl-tRNA to D-amino acids and free tRNA molecules, this enzyme counteracts the toxicity associated with the formation of D-aminoacyl-tRNA entities in vivo and helps enforce protein L-homochirality. This Listeria monocytogenes serotype 4a (strain HCC23) protein is D-aminoacyl-tRNA deacylase.